A 542-amino-acid chain; its full sequence is MARYVFITGGVVSSLGKGIAAAALAALLQARGYRVRIRKLDPYLNVDPGTMSPYQHGEVFVTDDGAETDLDLGHYERFTGRPANQQDNITTGRIYRNIIEKERRGDYLGATVQVIPHVTDEIKNFVLEGNEDYDFVLCEIGGTVGDIEAMPFLEAIRQLGNELPRGTAVYIHLTLMPYIPAAGELKTKPTQHSVKELRSIGIAPDILLVRADREIPESERRKLSLFCNVRESAVIQALDVATIYDVPIAYHKEGLDSEVLSAFGIDPAPKPRMDRWEEVSHRLHNPEGEVTIAVVGKYTGLKDAYKSLIEALHHGGLANKVKVNLDWIEAEVFESEDPAPYLEKVHGILVPGGFGERGAEGKILAAKFARERKVPYFGICFGMQMACIEAARNLVGIEDASSSEFDPTREPVVGLMTEWLKGNMLEKRAAAGDLGGTMRLGAYEAVLKPDSKIAQIYGSTDIHERHRHRYEVNIDYKDRLEAAGLNFAGMSPDGVLPETVEYADHPWFIGVQYHPELKSRPFEPHPLFASFIEAAIEQSRLV.

The segment at 1-265 (MARYVFITGG…DSEVLSAFGI (265 aa)) is amidoligase domain. Position 13 (Ser13) interacts with CTP. Position 13 (Ser13) interacts with UTP. An ATP-binding site is contributed by 14-19 (SLGKGI). Residue Tyr54 coordinates L-glutamine. Asp71 contributes to the ATP binding site. Positions 71 and 139 each coordinate Mg(2+). Residues 146–148 (DIE), 186–191 (KTKPTQ), and Lys222 each bind CTP. Residues 186 to 191 (KTKPTQ) and Lys222 each bind UTP. Positions 291-541 (TIAVVGKYTG…IEAAIEQSRL (251 aa)) constitute a Glutamine amidotransferase type-1 domain. Gly353 contacts L-glutamine. Catalysis depends on Cys380, which acts as the Nucleophile; for glutamine hydrolysis. L-glutamine-binding positions include 381–384 (FGMQ), Glu404, and Arg469. Residues His514 and Glu516 contribute to the active site.

This sequence belongs to the CTP synthase family. As to quaternary structure, homotetramer.

The catalysed reaction is UTP + L-glutamine + ATP + H2O = CTP + L-glutamate + ADP + phosphate + 2 H(+). The enzyme catalyses L-glutamine + H2O = L-glutamate + NH4(+). It catalyses the reaction UTP + NH4(+) + ATP = CTP + ADP + phosphate + 2 H(+). Its pathway is pyrimidine metabolism; CTP biosynthesis via de novo pathway; CTP from UDP: step 2/2. Allosterically activated by GTP, when glutamine is the substrate; GTP has no effect on the reaction when ammonia is the substrate. The allosteric effector GTP functions by stabilizing the protein conformation that binds the tetrahedral intermediate(s) formed during glutamine hydrolysis. Inhibited by the product CTP, via allosteric rather than competitive inhibition. Its function is as follows. Catalyzes the ATP-dependent amination of UTP to CTP with either L-glutamine or ammonia as the source of nitrogen. Regulates intracellular CTP levels through interactions with the four ribonucleotide triphosphates. This is CTP synthase from Brucella melitensis biotype 1 (strain ATCC 23456 / CCUG 17765 / NCTC 10094 / 16M).